The chain runs to 66 residues: MPKLKTKSGAKKRFKVTATGKVMSAQRGKRHGMIKRTKKQIRQLRGTRVIFKTDGDNIKKYFLPNA.

Residues 20 to 41 (GKVMSAQRGKRHGMIKRTKKQI) form a disordered region. The span at 27–41 (RGKRHGMIKRTKKQI) shows a compositional bias: basic residues.

The protein belongs to the bacterial ribosomal protein bL35 family.

The sequence is that of Large ribosomal subunit protein bL35 from Rhodopseudomonas palustris (strain BisB5).